Consider the following 378-residue polypeptide: WAQVVSQENLPNTMTMLPFTPNSESPSTSEALSTYSSIATVPVTEDPKESISPWGQTTAPASSIPLGTPELSSFFFTSAGASGNTPVPELTTSQEVSTEASLVLFPKSSGVASDPPVTITNPATSSAVASTSLETFKGTSAPPVTVTSSTMTSGPFVATTVSSETSGPPVTMATGSLGPSKETHGLSATIATSSGESSSVAGGTPVFSTKISTTSTPNPITTVPPRPGSSGMLLVSMLIALTVVLVLVALLLLWRQRQKRRTGALTLSRGGKRNGTVDAWAGPARVPDEEATTASGSGGNKSSGAPETDGSGQRPTLTTFFSRRKSRQGSVALEELKPGTGPNLKGEEEPLVGSEDEAVETPTSDGPQAKDGAAPQSL.

Residues 1–7 (WAQVVSQ) form the signal peptide. Over 8-231 (ENLPNTMTML…TVPPRPGSSG (224 aa)) the chain is Extracellular. O-linked (GalNAc...) threonine glycans are attached at residues Thr13, Thr15, and Thr20. Residues 13 to 33 (TMTMLPFTPNSESPSTSEALS) are disordered. Residues Ser23, Ser25, and Ser27 are each glycosylated (O-linked (GalNAc...) serine). The O-linked (GalNAc...) threonine glycan is linked to Thr28. 2 O-linked (GalNAc...) serine glycosylation sites follow: Ser29 and Ser33. The O-linked (GalNAc...) threonine glycan is linked to Thr34. Ser36 and Ser37 each carry an O-linked (GalNAc...) serine glycan. O-linked (GalNAc...) threonine glycosylation is present at Thr40. O-linked (GalNAc...) serine glycosylation is found at Ser108 and Ser113. Residues Thr118, Thr120, and Thr124 are each glycosylated (O-linked (GalNAc...) threonine). 2 O-linked (GalNAc...) serine glycosylation sites follow: Ser125 and Ser126. Thr174 carries O-linked (GalNAc...) threonine glycosylation. Residues Ser176 and Ser180 are each glycosylated (O-linked (GalNAc...) serine). O-linked (GalNAc...) threonine glycosylation occurs at Thr183. Ser187 carries O-linked (GalNAc...) serine glycosylation. Thr189 is a glycosylation site (O-linked (GalNAc...) threonine). The chain crosses the membrane as a helical span at residues 232 to 254 (MLLVSMLIALTVVLVLVALLLLW). Positions 255 to 285 (RQRQKRRTGALTLSRGGKRNGTVDAWAGPAR) are required for interaction with EZR, MSN and RDX and for co-localization to microvilli. The Cytoplasmic portion of the chain corresponds to 255–378 (RQRQKRRTGA…AKDGAAPQSL (124 aa)). Residues 259-273 (KRRTGALTLSRGGKR) carry the Nuclear localization signal motif. A disordered region spans residues 265 to 378 (LTLSRGGKRN…AKDGAAPQSL (114 aa)). Ser268 bears the Phosphoserine mark. Position 276 is a phosphothreonine (Thr276). Residues 310–321 (GSGQRPTLTTFF) are compositionally biased toward polar residues. A Phosphoserine modification is found at Ser311. Thr316 bears the Phosphothreonine mark. 2 positions are modified to phosphoserine: Ser322 and Ser326. Ser330 carries the post-translational modification Phosphoserine; by PKC/PRKCQ. At Ser354 the chain carries Phosphoserine. Thr361 bears the Phosphothreonine mark.

As to quaternary structure, interacts with SIGLEC1. In terms of assembly, monomer. Interacts with CTNNB1. Interacts with EZR, MSN and RDX (via FERM domain). In terms of processing, has a high content of sialic acid and O-linked carbohydrate structures. Post-translationally, phosphorylation at Ser-330 is regulated by chemokines, requires its association with ERM proteins (EZR, RDX and MSN) and is essential for its function in the regulation of T-cell trafficking to lymph nodes. Cleavage by CTSG releases its extracellular domain and triggers its intramembrane proteolysis by gamma-secretase releasing the CD43 cytoplasmic tail chain (CD43-ct) which translocates to the nucleus. In terms of processing, sumoylated. As to expression, cell surface of thymocytes, T-lymphocytes, neutrophils, plasma cells and myelomas.

It localises to the membrane. The protein resides in the cell projection. Its subcellular location is the microvillus. It is found in the uropodium. The protein localises to the nucleus. It localises to the PML body. Functionally, predominant cell surface sialoprotein of leukocytes which regulates multiple T-cell functions, including T-cell activation, proliferation, differentiation, trafficking and migration. Positively regulates T-cell trafficking to lymph-nodes via its association with ERM proteins (EZR, RDX and MSN). Negatively regulates Th2 cell differentiation and predisposes the differentiation of T-cells towards a Th1 lineage commitment. Promotes the expression of IFN-gamma by T-cells during T-cell receptor (TCR) activation of naive cells and induces the expression of IFN-gamma by CD4(+) T-cells and to a lesser extent by CD8(+) T-cells. Plays a role in preparing T-cells for cytokine sensing and differentiation into effector cells by inducing the expression of cytokine receptors IFNGR and IL4R, promoting IFNGR and IL4R signaling and by mediating the clustering of IFNGR with TCR. Acts as a major E-selectin ligand responsible for Th17 cell rolling on activated vasculature and recruitment during inflammation. Mediates Th17 cells, but not Th1 cells, adhesion to E-selectin. Acts as a T-cell counter-receptor for SIGLEC1. Its function is as follows. Protects cells from apoptotic signals, promoting cell survival. This chain is Leukosialin (Spn), found in Rattus norvegicus (Rat).